Consider the following 402-residue polypeptide: Multidrug resistance protein MdtH (402 aa).

The Cytoplasmic segment spans residues Met-1–Lys-12. The helical transmembrane segment at Tyr-13–Ile-33 threads the bilayer. Residues Ser-34–Glu-98 lie on the Periplasmic side of the membrane. Residues Pro-99 to Phe-116 traverse the membrane as a helical segment. The Cytoplasmic portion of the chain corresponds to Asp-117–Ser-138. Residues Leu-139–Leu-159 form a helical membrane-spanning segment. Residues Gln-160–Arg-164 are Periplasmic-facing. The chain crosses the membrane as a helical span at residues Leu-165–Leu-185. Residues Pro-186–Tyr-213 lie on the Cytoplasmic side of the membrane. The helical transmembrane segment at Val-214 to Met-234 threads the bilayer. At Val-235 to Ala-243 the chain is on the periplasmic side. A helical transmembrane segment spans residues Ala-244 to Ala-264. Residues Arg-265–Arg-276 lie on the Cytoplasmic side of the membrane. Residues Leu-277–Leu-297 form a helical membrane-spanning segment. The Periplasmic portion of the chain corresponds to Gln-298–Gln-299. The chain crosses the membrane as a helical span at residues Leu-300–Thr-320. At Leu-321–Arg-339 the chain is on the cytoplasmic side. A helical transmembrane segment spans residues Leu-340–Gly-360. The Periplasmic portion of the chain corresponds to Lys-361–Glu-367. The chain crosses the membrane as a helical span at residues Leu-368–Phe-388. The Cytoplasmic segment spans residues Ser-389 to Ala-402.

The protein belongs to the major facilitator superfamily. DHA1 family. MdtH (TC 2.A.1.2.21) subfamily.

It localises to the cell inner membrane. This chain is Multidrug resistance protein MdtH, found in Salmonella paratyphi B (strain ATCC BAA-1250 / SPB7).